A 484-amino-acid chain; its full sequence is Tyramine receptor 1 (484 aa).

Topologically, residues 1 to 54 (MVRVELQAASLMNGSSAAEEPQDALVGGDACGGRRPPSVLGVRLAVPEWEVAVT) are extracellular. Residue N13 is glycosylated (N-linked (GlcNAc...) asparagine). Residues 55 to 77 (AVSLSLIILITIVGNVLVVLSVF) traverse the membrane as a helical segment. Residues 78 to 87 (TYKPLRIVQN) are Cytoplasmic-facing. The chain crosses the membrane as a helical span at residues 88–109 (FFIVSLAVADLTVAVLVMPFNV). Topologically, residues 110–126 (AYSLIQRWVFGIVVCKM) are extracellular. The cysteines at positions 124 and 203 are disulfide-linked. Residues 127–147 (WLTCDVLCCTASILNLCAIAL) traverse the membrane as a helical segment. At 148–167 (DRYWAITDPINYAQKRTLRR) the chain is on the cytoplasmic side. The helical transmembrane segment at 168–190 (VLAMIAGVWLLSGVISSPPLIGW) threads the bilayer. The Extracellular segment spans residues 191-215 (NDWPMEFNDTTPCQLTEEQGYVIYS). N198 carries an N-linked (GlcNAc...) asparagine glycan. A helical membrane pass occupies residues 216–237 (SLGSFFIPLFIMTIVYVEIFIA). Topologically, residues 238–411 (TKRRLRERAK…LSKERRAART (174 aa)) are cytoplasmic. A compositionally biased stretch (polar residues) spans 253–280 (SAMKQQMAAQAVPSSVPSHDQESVSSET). Disordered stretches follow at residues 253 to 322 (SAMK…PAMV) and 358 to 383 (TTTA…PTPV). The span at 295 to 306 (EKRRKTKKKSKK) shows a compositional bias: basic residues. The segment covering 361–378 (AVTDSPRSRTASQKGSTA) has biased composition (polar residues). A helical transmembrane segment spans residues 412–433 (LGIIMGVFVVCWLPFFLMYVIV). Residues 434 to 448 (PFCNPSCKPSPKLVN) are Extracellular-facing. Residues 449–470 (FITWLGYINSALNPIIYTIFNL) form a helical membrane-spanning segment. At 471–484 (DFRRAFKKLLHFKT) the chain is on the cytoplasmic side.

This sequence belongs to the G-protein coupled receptor 1 family. In terms of tissue distribution, present mainly in the central nervous system, especially in the supra- and subesophageal, thoracic and abdominal ganglia. Not found in the distal part of optic lobes.

It localises to the cell membrane. Functionally, G-protein coupled receptor for tyramine, a known neurotransmitter and neuromodulator and direct precursor of octopamine. The rank order of potency for agonists of this receptor is tyramine &gt; naphazoline &gt; tolazoline &gt; DL-octopamine &gt; dopamine &gt; epinephrine &gt; 5-hydroxytryptamine. For antagonists, the rank order is yohimbine &gt; chlorpromazine &gt; mianserin &gt; phentolamine &gt; metoclopramide. The chain is Tyramine receptor 1 (GCR1) from Locusta migratoria (Migratory locust).